The following is a 360-amino-acid chain: UDP-N-acetylglucosamine--N-acetylmuramyl-(pentapeptide) pyrophosphoryl-undecaprenol N-acetylglucosamine transferase (360 aa).

UDP-N-acetyl-alpha-D-glucosamine-binding positions include 16 to 18 (TGG), asparagine 128, arginine 165, serine 191, isoleucine 247, 266 to 271 (ALTVSE), and glutamine 292.

It belongs to the glycosyltransferase 28 family. MurG subfamily.

Its subcellular location is the cell inner membrane. It carries out the reaction di-trans,octa-cis-undecaprenyl diphospho-N-acetyl-alpha-D-muramoyl-L-alanyl-D-glutamyl-meso-2,6-diaminopimeloyl-D-alanyl-D-alanine + UDP-N-acetyl-alpha-D-glucosamine = di-trans,octa-cis-undecaprenyl diphospho-[N-acetyl-alpha-D-glucosaminyl-(1-&gt;4)]-N-acetyl-alpha-D-muramoyl-L-alanyl-D-glutamyl-meso-2,6-diaminopimeloyl-D-alanyl-D-alanine + UDP + H(+). It functions in the pathway cell wall biogenesis; peptidoglycan biosynthesis. Cell wall formation. Catalyzes the transfer of a GlcNAc subunit on undecaprenyl-pyrophosphoryl-MurNAc-pentapeptide (lipid intermediate I) to form undecaprenyl-pyrophosphoryl-MurNAc-(pentapeptide)GlcNAc (lipid intermediate II). The polypeptide is UDP-N-acetylglucosamine--N-acetylmuramyl-(pentapeptide) pyrophosphoryl-undecaprenol N-acetylglucosamine transferase (Shewanella amazonensis (strain ATCC BAA-1098 / SB2B)).